The primary structure comprises 109 residues: Small ribosomal subunit protein eS25 (109 aa).

Over residues 1-13 (MVKKIQESKEKKA) the composition is skewed to basic and acidic residues. The tract at residues 1-34 (MVKKIQESKEKKALKAASGTRKDKKKWGDGRKKE) is disordered.

It belongs to the eukaryotic ribosomal protein eS25 family.

This Encephalitozoon cuniculi (strain GB-M1) (Microsporidian parasite) protein is Small ribosomal subunit protein eS25 (RPS25-1).